We begin with the raw amino-acid sequence, 125 residues long: Photosystem II extrinsic protein U (125 aa).

A signal peptide spans 1–29; sequence MKRLLSWLTGLVVIAGLLIGLLVPPSVSA.

It belongs to the PsbU family. PSII is composed of 1 copy each of membrane proteins PsbA, PsbB, PsbC, PsbD, PsbE, PsbF, PsbH, PsbI, PsbJ, PsbK, PsbL, PsbM, PsbT, PsbX, PsbY, PsbZ, Psb30/Ycf12, peripheral proteins PsbO, CyanoQ (PsbQ), PsbU, PsbV and a large number of cofactors. It forms dimeric complexes.

It localises to the cellular thylakoid membrane. Functionally, one of the extrinsic, lumenal subunits of photosystem II (PSII). PSII is a light-driven water plastoquinone oxidoreductase, using light energy to abstract electrons from H(2)O, generating a proton gradient subsequently used for ATP formation. The extrinsic proteins stabilize the structure of photosystem II oxygen-evolving complex (OEC), the ion environment of oxygen evolution and protect the OEC against heat-induced inactivation. The protein is Photosystem II extrinsic protein U of Synechococcus sp. (strain CC9311).